Here is a 313-residue protein sequence, read N- to C-terminus: Protein TIC 22-like, chloroplastic (313 aa).

The N-terminal 96 residues, 1 to 96 (MNSNIFPPSK…RISDDGGGAR (96 aa)), are a transit peptide targeting the chloroplast.

This sequence belongs to the Tic22 family.

It is found in the plastid. The protein resides in the chloroplast intermembrane space. Its function is as follows. Involved in protein precursor import into chloroplasts. This Arabidopsis thaliana (Mouse-ear cress) protein is Protein TIC 22-like, chloroplastic (TIC22L).